Here is a 210-residue protein sequence, read N- to C-terminus: CKLF-like MARVEL transmembrane domain-containing protein 2B (210 aa).

Transmembrane regions (helical) follow at residues 35-55 (FWAQ…IAAM), 65-85 (PIVI…FFLY), 103-123 (LMND…ALEA), and 127-147 (LPVP…ISII). The MARVEL domain maps to 35–157 (FWAQGHAECK…DLCLQRRQFK (123 aa)).

This sequence belongs to the chemokine-like factor family.

The protein localises to the membrane. In Mus musculus (Mouse), this protein is CKLF-like MARVEL transmembrane domain-containing protein 2B (Cmtm2b).